Consider the following 327-residue polypeptide: MAVYTDVAADELADFLSQYDLGELLSYKGIAEGVENSNFLLHTTKGSFILTLYEKRVAKNDLPFFLALMTHLAEHGVNCPLPVKGRDGEALRELSGRPAAIITFLEGVWPRKPNAAHCAGVGEGLARMHLAGANFAIRRANALSVAGWRPLFDAAASRADEVQPGLRAFLAAELDYLASGVWPTNLPEGVIHADLFNDNVFFLGDKLSGIIDFTFACNDMLAYDVAICLNAWCFEPDHSFNVTKARAFLNAYGRVRKLSEAEEAALPLLARGAAIRFLLTRLVDWLNVPPGALVRPKDPLEYVRKLRFHQSVSSVRDYGLMPSGLVA.

Belongs to the pseudomonas-type ThrB family.

The enzyme catalyses L-homoserine + ATP = O-phospho-L-homoserine + ADP + H(+). The protein operates within amino-acid biosynthesis; L-threonine biosynthesis; L-threonine from L-aspartate: step 4/5. In Bradyrhizobium diazoefficiens (strain JCM 10833 / BCRC 13528 / IAM 13628 / NBRC 14792 / USDA 110), this protein is Homoserine kinase.